Reading from the N-terminus, the 351-residue chain is Nicotinate-nucleotide--dimethylbenzimidazole phosphoribosyltransferase (351 aa).

Catalysis depends on Glu-317, which acts as the Proton acceptor.

Belongs to the CobT family.

It carries out the reaction 5,6-dimethylbenzimidazole + nicotinate beta-D-ribonucleotide = alpha-ribazole 5'-phosphate + nicotinate + H(+). It participates in nucleoside biosynthesis; alpha-ribazole biosynthesis; alpha-ribazole from 5,6-dimethylbenzimidazole: step 1/2. Functionally, catalyzes the synthesis of alpha-ribazole-5'-phosphate from nicotinate mononucleotide (NAMN) and 5,6-dimethylbenzimidazole (DMB). The polypeptide is Nicotinate-nucleotide--dimethylbenzimidazole phosphoribosyltransferase (Pseudomonas putida (strain ATCC 47054 / DSM 6125 / CFBP 8728 / NCIMB 11950 / KT2440)).